A 325-amino-acid polypeptide reads, in one-letter code: MIDNYNRNINYLRISVTDRCNLRCVYCMPPEGVKQTPHSEILSLEEFARVVDAASDIGIRKIRITGGEPLVRKNIVNLFEKISTNSAIDDISLTTNGVLFAEMASDLKKAGLNRVNFSLDSLNPDTFRDITRMGKFNDVWRSIQKALELELHPVKLNVVAVRGINDHEFADFARLTKEIPIHVRFIELMPIGECNPWAVGNFIAAEEILHGLQQKFGLLDTQVKVTGSGPAKYYCLPNSKGTIGFITAISEHFCAGCNRLRLTANGQLRPCLYGKQEFDLKTPLREGASRQELAKIITKAIRHKPSQHHMEDGWRDRRVMSQIGG.

The region spanning 4-219 (NYNRNINYLR…HGLQQKFGLL (216 aa)) is the Radical SAM core domain. Arg-13 is a GTP binding site. [4Fe-4S] cluster-binding residues include Cys-20 and Cys-24. Tyr-26 contributes to the S-adenosyl-L-methionine binding site. Cys-27 is a [4Fe-4S] cluster binding site. Arg-63 contributes to the GTP binding site. S-adenosyl-L-methionine is bound at residue Gly-67. Thr-94 serves as a coordination point for GTP. Ser-118 contributes to the S-adenosyl-L-methionine binding site. GTP is bound at residue Lys-155. S-adenosyl-L-methionine is bound at residue Met-189. Residues Cys-254 and Cys-257 each contribute to the [4Fe-4S] cluster site. 259 to 261 (RLR) is a GTP binding site. Residue Cys-271 coordinates [4Fe-4S] cluster.

Belongs to the radical SAM superfamily. MoaA family. Monomer and homodimer. Requires [4Fe-4S] cluster as cofactor.

It catalyses the reaction GTP + AH2 + S-adenosyl-L-methionine = (8S)-3',8-cyclo-7,8-dihydroguanosine 5'-triphosphate + 5'-deoxyadenosine + L-methionine + A + H(+). The protein operates within cofactor biosynthesis; molybdopterin biosynthesis. Functionally, catalyzes the cyclization of GTP to (8S)-3',8-cyclo-7,8-dihydroguanosine 5'-triphosphate. The sequence is that of GTP 3',8-cyclase from Desulforamulus reducens (strain ATCC BAA-1160 / DSM 100696 / MI-1) (Desulfotomaculum reducens).